The sequence spans 570 residues: Developmental and secondary metabolism regulator veA (570 aa).

Disordered regions lie at residues 1-24 (MATRPPLMPPANETESSVSRISRE), 39-60 (ERARACGAGAKSSADRRPVDPP), 266-491 (DMYA…LGSG), and 504-541 (KRSHEETFGSDERPLHNGMRPDMDQYPSMGRKQPDYGR). The 207-residue stretch at 25–231 (GKKITYKLSV…AEQGCRVRIR (207 aa)) folds into the Velvet domain. The Nuclear localization signal motif lies at 39–44 (ERARAC). Over residues 278 to 287 (STSISTTADT) the composition is skewed to polar residues. Residues 315-335 (SMPAASAAPAPAPVHSPATSA) show a composition bias toward low complexity. Composition is skewed to polar residues over residues 336 to 354 (QTSSYQSHLSFGATQSQYP), 363 to 395 (QSATPTNTYSPHPSYSHSRNPSNGTEYDATSSG), and 427 to 445 (NMQTSTDSRSSDANAYPTL). The tract at residues 454-493 (PTPANHVTSLPPLKVLSGEYSHPSQPNAQSPHHDLGSGKR) is PEST. A compositionally biased stretch (basic and acidic residues) spans 505 to 526 (RSHEETFGSDERPLHNGMRPDM).

Belongs to the velvet family. VeA subfamily. In terms of assembly, component of the heterotrimeric velvet complex composed of laeA, veA and velB; VeA acting as a bridging protein between laeA and velB.

It localises to the nucleus. Its subcellular location is the cytoplasm. Its function is as follows. Component of the velvet transcription factor complex that controls sexual/asexual developmental ratio in response to light, promoting sexual development in the darkness while stimulating asexual sporulation under illumination. The velvet complex hat acts as a global regulator for secondary metabolite gene expression. Controls the expression of hundreds of genes, including those comprising more than a dozen known secondary metabolite gene clusters. Controls the expression of the gliotoxin gene cluster. Controls the expression of the fumagillin, fumitremorgin G, fumigaclavine C and glionitrin gene clusters. The regulation of the fumagillin gene cluster and fumagillin production is performed through direct control of the expression of fumR. Negatively regulates conidiation. Required for normal protease activity. The chain is Developmental and secondary metabolism regulator veA from Aspergillus fumigatus (strain ATCC MYA-4609 / CBS 101355 / FGSC A1100 / Af293) (Neosartorya fumigata).